The chain runs to 1611 residues: MPARTAPARVPALASRAFSLPDDVRRRLKDLERDSLTEKECVKEKLNLLHEFLRTEIKNQLCDLETKLHKEELSEEGYLAKVKSLLNKDLSLENGAHAFSREANGCLENGSQTSGEDCRVVMAEKGKPPKPVSRLYTPRRSKSDGETKSEVSSSPRITRKTTRQTTITSHFPRGPAKRKPEEEPEKVKSDDSVDEEKDQEEKRRRVTSRERVAGLLPAEEPGRVRPGTHMEEEGRDDKEEKRLRSQTKEPTPKHKAKEEPDRDVRPGGAQAEMNEGEDKDEKRHRSQPKDLASKRRPEEKEPERVKPQVSDEKDEDEKEEKRRRTTYRELTEKKMTRTKIAVVSKTNPPKCTECLQYLDDPELRYEQHPPDAVEEIQILTNERLSIFDANESGFESYEDLPQHKLTCFSVYCKRGHLCPIDTGLIEKDVELLFSGSAKPIYEDDPSPEGGINGKNFGPINEWWIAGFDGGEKALLGFSTSFAEYILMDPSPEYAPLFSVMQEKIYISKIVVEFLQSNPDSTYEDLINKIETTVPPCMLNLNRFTEDSLLRHAQFVVEQVESYDRAGDSDEQPIFLSPCMRDLIKLAGVTLGKRRAERRQTIRQPAKEKDKGPTKATTTKLVYQIFDTFFAEQIEKDDKEDKENAFKRRRCGVCEICQQPECGKCKACKDMVKFGGSGRSKQACQKRRCPNMAMKEADDDEEVDDNIPEMPSPKKMHQGKKKKQNKNRISWVGDAVKTDGKKSYYKKVCIDSETLEVGDCVSVIPDDSSKPLYLARVTALWEDSSNGQMFHAHWFCAGTDTVLGATSDPLELFLVDECEDMQLSYIHSKVQVIYKAPSENWAMEGGVDPEALMSEDDGKTYFYQLWYDQDYARFESPPKTQPTEDNKYKFCASCARLAEMRQKEIPRVVEQLQDLEGRVLYSLATKNGVQYRVGDGVYLPPEAFTFNIKLSSPVKRPRKEPVDEALYPEHYRKYSDYIKGSNLDAPEPYRIGRIKEIFCSKKSNGRPNETDIKIRVNKFYRPENTHKSTPASYHADINLLYWSDEEAVVDFKAVQGRCTVEYGEDLPQCLQDFSAGGPDRFYFLEAYNAKSKSFEDPPNHARSTGNKGKGKGKGKNRTKSQTCEPSELETEIKLPKLRTLDVFSGCGGLSEGFHQAGISETLWAIEMWDPAAQAFRLNNPGSTVFTEDCNVLLKLVMAGEVTNSRGQKLPQKGDVEMLCGGPPCQGFSGMNRFNSRTYSKFKNSLVVSFLSYCDYYRPRYFLLENVRNFVSFKRSMVLKLTLRCLVRMGYQCTFGVLQAGQYGVAQTRRRAIILAAAPGEPLPLFPEPLHVFAPRACQLSVVVDDKKFVSNITRLSSGPFRTITVRDTMSDLPEIRNGASALEISYNGEPQSWFQRQLRGSQYQPILRDHICKDMSALVAARMRHIPLAPGSDWRDLPNIEVRLSDGTLARKLRYNYHDKKNGCSSSGALRGVCSCVEGKPCEPAARQFNTLIPWCLPHTGNRHNHWAGLYGRLEWDGFFSTTVTNPEPMGKQGRVLHPEQHRVVSVRECARSQGFPDTYRLFGNILDKHRQVGNAVPPPLAKAIGLEIKRCMLAKARESASAKIKEEAAKD.

The interval 1–120 is interaction with DMAP1; that stretch reads MPARTAPARV…SQTSGEDCRV (120 aa). Residues 1–148 form an interaction with DNMT3A region; the sequence is MPARTAPARV…RRSKSDGETK (148 aa). Interaction with the PRC2/EED-EZH2 complex stretches follow at residues 1 to 334 and 306 to 603; these read MPAR…TEKK and KPQV…TIRQ. Ser-15 bears the Phosphoserine mark. The DMAP1-binding domain occupies 16-109; that stretch reads RAFSLPDDVR…SREANGCLEN (94 aa). Lys-70 carries the N6,N6-dimethyllysine; by EHMT2 modification. The interval 123-328 is disordered; the sequence is AEKGKPPKPV…EEKRRRTTYR (206 aa). Ser-133 carries the phosphoserine modification. Position 137 is a phosphothreonine (Thr-137). Phosphoserine is present on Ser-141. Lys-142 is modified (N6-methyllysine; by SETD7). Ser-143 bears the Phosphoserine; by PKB/AKT1 mark. The segment at 149–216 is interaction with DNMT3B; it reads SEVSSSPRIT…TSRERVAGLL (68 aa). Residues Ser-152 and Ser-154 each carry the phosphoserine modification. Residue Lys-160 is modified to N6-acetyllysine. The interval 163–174 is interaction with PCNA; the sequence is RQTTITSHFPRG. Residues 163-174 show a composition bias toward low complexity; sequence RQTTITSHFPRG. A Phosphothreonine modification is found at Thr-166. Positions 177–204 match the Nuclear localization signal motif; that stretch reads KRKPEEEPEKVKSDDSVDEEKDQEEKRR. Composition is skewed to basic and acidic residues over residues 178–191, 199–212, 220–265, 279–311, and 319–328; these read RKPEEEPEKVKSDD, QEEKRRRVTSRERV, EPGR…RDVR, KDEKRHRSQPKDLASKRRPEEKEPERVKPQVSD, and EEKRRRTTYR. Lys-188 is subject to N6-acetyllysine. Position 257 is an N6-acetyllysine; alternate (Lys-257). Lys-257 participates in a covalent cross-link: Glycyl lysine isopeptide (Lys-Gly) (interchain with G-Cter in SUMO2); alternate. Ser-310 carries the post-translational modification Phosphoserine. The segment at 329–548 is DNA replication foci-targeting sequence; that stretch reads ELTEKKMTRT…NLNRFTEDSL (220 aa). Residues Cys-351 and Cys-354 each contribute to the Zn(2+) site. 2 positions are modified to phosphoserine: Ser-392 and Ser-396. Cys-412 and His-416 together coordinate Zn(2+). Residues Ser-507 and Ser-547 each carry the phosphoserine modification. The interval 594–614 is disordered; it reads RAERRQTIRQPAKEKDKGPTK. The CXXC-type zinc-finger motif lies at 643–689; the sequence is NAFKRRRCGVCEICQQPECGKCKACKDMVKFGGSGRSKQACQKRRCP. Positions 650, 653, 656, 661, 664, 667, 683, and 688 each coordinate Zn(2+). Residues 690–751 are autoinhibitory linker; it reads NMAMKEADDD…SYYKKVCIDS (62 aa). Residues 695-726 are disordered; the sequence is EADDDEEVDDNIPEMPSPKKMHQGKKKKQNKN. Residues 696-706 show a composition bias toward acidic residues; sequence ADDDEEVDDNI. Phosphoserine is present on Ser-711. Over residues 713–725 the composition is skewed to basic residues; sequence KKMHQGKKKKQNK. Ser-729 carries the post-translational modification Phosphoserine. Lys-746 carries the post-translational modification N6-acetyllysine. Residues 752-877 enclose the BAH 1 domain; the sequence is ETLEVGDCVS…QDYARFESPP (126 aa). At Ser-875 the chain carries Phosphoserine. An N6-acetyllysine mark is found at Lys-888, Lys-954, Lys-958, Lys-972, and Lys-1051. Residues 969–1097 form the BAH 2 domain; it reads HYRKYSDYIK…AKSKSFEDPP (129 aa). The disordered stretch occupies residues 1091 to 1126; it reads KSFEDPPNHARSTGNKGKGKGKGKNRTKSQTCEPSE. A run of 4 repeats spans residues 1106 to 1107, 1108 to 1109, 1110 to 1111, and 1112 to 1113. The segment at 1106–1115 is 5 X 2 AA tandem repeats of K-G; sequence KGKGKGKGKN. Residues 1107 to 1117 are compositionally biased toward basic residues; the sequence is GKGKGKGKNRT. An N6-acetyllysine mark is found at Lys-1108, Lys-1110, Lys-1112, Lys-1114, and Lys-1118. The 5; approximate repeat unit spans residues 1114 to 1115; sequence KN. The interaction with the PRC2/EED-EZH2 complex stretch occupies residues 1118–1611; the sequence is KSQTCEPSEL…AKIKEEAAKD (494 aa). The 460-residue stretch at 1136-1595 folds into the SAM-dependent MTase C5-type domain; sequence LRTLDVFSGC…LEIKRCMLAK (460 aa). Residues 1136-1611 form a catalytic region; that stretch reads LRTLDVFSGC…AKIKEEAAKD (476 aa). Residues Ser-1143, 1147–1148, 1165–1166, 1187–1188, and Cys-1188 contribute to the S-adenosyl-L-methionine site; these read GL, EM, and DC. Cys-1223 is an active-site residue. N6-acetyllysine occurs at positions 1346 and 1412. S-adenosyl-L-methionine-binding residues include Asn-1574 and Val-1576. Lys-1605 is covalently cross-linked (Glycyl lysine isopeptide (Lys-Gly) (interchain with G-Cter in SUMO2)).

The protein belongs to the class I-like SAM-binding methyltransferase superfamily. C5-methyltransferase family. As to quaternary structure, homodimer. Forms a stable complex with E2F1, BB1 and HDAC1. Forms a complex with DMAP1 and HDAC2, with direct interaction. Interacts with the PRC2/EED-EZH2 complex. Probably part of a corepressor complex containing ZNF304, TRIM28, SETDB1 and DNMT1. Interacts with UHRF1; promoting its recruitment to hemimethylated DNA. Interacts with USP7, promoting its deubiquitination. Interacts with PCNA. Interacts with MBD2 and MBD3. Interacts with DNMT3A and DNMT3B. Interacts with UBC9. Interacts with CSNK1D. Interacts with HDAC1. Interacts with BAZ2A/TIP5. Interacts with SIRT7. Interacts with ZNF263; recruited to the SIX3 promoter along with other proteins involved in chromatin modification and transcriptional corepression where it contributes to transcriptional repression. Interacts with L3MBTL3 and DCAF5; the interaction requires DNMT1 methylation at Lys-142 and is necessary to target DNMT1 for ubiquitination by the CRL4-DCAF5 E3 ubiquitin ligase complex and proteasomal degradation. Interacts with PHF20L1; the interaction requires DNMT1 methylation at Lys-142 and protects DNMT1 from ubiquitination and proteasomal degradation. In terms of processing, sumoylated; sumoylation increases activity. Acetylation on multiple lysines, mainly by KAT2B/PCAF, regulates cell cycle G(2)/M transition. Deacetylation of Lys-1346 and Lys-1412 by SIRT1 increases methyltransferase activity. Post-translationally, phosphorylation of Ser-154 by CDKs is important for enzymatic activity and protein stability. Phosphorylation of Ser-143 by AKT1 prevents methylation by SETD7 thereby increasing DNMT1 stability. In terms of processing, methylation at Lys-142 by SETD7 is necessary for the regulation of DNMT1 proteasomal degradation. Ubiquitinated by UHRF1; interaction with USP7 counteracts ubiquitination by UHRF1 by promoting deubiquitination and preventing degradation by the proteasome.

The protein localises to the nucleus. The enzyme catalyses a 2'-deoxycytidine in DNA + S-adenosyl-L-methionine = a 5-methyl-2'-deoxycytidine in DNA + S-adenosyl-L-homocysteine + H(+). Methylates CpG residues. Preferentially methylates hemimethylated DNA. Associates with DNA replication sites in S phase maintaining the methylation pattern in the newly synthesized strand, that is essential for epigenetic inheritance. Associates with chromatin during G2 and M phases to maintain DNA methylation independently of replication. It is responsible for maintaining methylation patterns established in development. DNA methylation is coordinated with methylation of histones. Mediates transcriptional repression by direct binding to HDAC2. In association with DNMT3B and via the recruitment of CTCFL/BORIS, involved in activation of BAG1 gene expression by modulating dimethylation of promoter histone H3 at H3K4 and H3K9. Probably forms a corepressor complex required for activated KRAS-mediated promoter hypermethylation and transcriptional silencing of tumor suppressor genes (TSGs) or other tumor-related genes in colorectal cancer (CRC) cells. Also required to maintain a transcriptionally repressive state of genes in undifferentiated embryonic stem cells (ESCs). Associates at promoter regions of tumor suppressor genes (TSGs) leading to their gene silencing. Promotes tumor growth. The polypeptide is DNA (cytosine-5)-methyltransferase 1 (DNMT1) (Bos taurus (Bovine)).